Consider the following 318-residue polypeptide: Death effector domain-containing protein (318 aa).

In terms of domain architecture, DED spans 25–103 (SLHRMFDIVG…RHDLLPYVTL (79 aa)). 2 disordered regions span residues 128–147 (PRAL…TVPP) and 160–191 (QMCS…KEKQ).

Interacts with CASP8, CASP10, KRT8, KRT18, CASP3 and FADD. Homodimerizes and heterodimerizes with DEDD2. Exists predominantly in a mono- or diubiquitinated form. In terms of tissue distribution, widely expressed with highest levels in testis.

Its subcellular location is the cytoplasm. It is found in the nucleus. The protein resides in the nucleolus. A scaffold protein that directs CASP3 to certain substrates and facilitates their ordered degradation during apoptosis. May also play a role in mediating CASP3 cleavage of KRT18. Regulates degradation of intermediate filaments during apoptosis. May play a role in the general transcription machinery in the nucleus and might be an important regulator of the activity of GTF3C3. Inhibits DNA transcription in vitro. In Homo sapiens (Human), this protein is Death effector domain-containing protein (DEDD).